Here is a 138-residue protein sequence, read N- to C-terminus: Single-stranded DNA-binding protein 4 (138 aa).

In terms of domain architecture, SSB spans 1–104 (MINNVVLIGR…VVADSFQILE (104 aa)). Residues 107–138 (DNSTNQASMDDQLPPSFGNSQPMDISDDDLPF) form a disordered region. Positions 133–138 (DDDLPF) match the Important for interaction with partner proteins motif.

As to quaternary structure, homotetramer.

Functionally, plays an important role in DNA replication, recombination and repair. Binds to ssDNA and to an array of partner proteins to recruit them to their sites of action during DNA metabolism. The polypeptide is Single-stranded DNA-binding protein 4 (ssb4) (Streptococcus agalactiae serotype V (strain ATCC BAA-611 / 2603 V/R)).